Here is a 53-residue protein sequence, read N- to C-terminus: Rubredoxin 3 (53 aa).

Residues 1 to 53 enclose the Rubredoxin-like domain; that stretch reads MQKWVCVPCGYEYDPADGDPENGIEPGTAFEDLPEDWVCPVCGVDKSFFEPVS. Residues Cys6, Cys9, Cys39, and Cys42 each coordinate Fe cation.

Belongs to the rubredoxin family. Monomer. Fe(3+) is required as a cofactor.

Functionally, functions as an electron acceptor for pyruvate ferredoxin oxidoreductase (PFOR). The protein is Rubredoxin 3 (rub3) of Chlorobaculum tepidum (strain ATCC 49652 / DSM 12025 / NBRC 103806 / TLS) (Chlorobium tepidum).